The primary structure comprises 437 residues: Glutamate-1-semialdehyde 2,1-aminomutase (437 aa).

Lys-273 carries the N6-(pyridoxal phosphate)lysine modification.

The protein belongs to the class-III pyridoxal-phosphate-dependent aminotransferase family. HemL subfamily. In terms of assembly, homodimer. The cofactor is pyridoxal 5'-phosphate.

Its subcellular location is the cytoplasm. It catalyses the reaction (S)-4-amino-5-oxopentanoate = 5-aminolevulinate. It participates in porphyrin-containing compound metabolism; protoporphyrin-IX biosynthesis; 5-aminolevulinate from L-glutamyl-tRNA(Glu): step 2/2. This is Glutamate-1-semialdehyde 2,1-aminomutase from Chlamydia abortus (strain DSM 27085 / S26/3) (Chlamydophila abortus).